The chain runs to 644 residues: Core protein VP4 (644 aa).

This sequence belongs to the orbivirus VP4 family.

Its subcellular location is the virion. The VP4 protein is one of the five proteins (with VP1, VP3, VP6 and VP7) which form the inner capsid of the virus. This is Core protein VP4 (Segment-4) from Antilocapra americana (Pronghorn).